Consider the following 279-residue polypeptide: Digeranylgeranylglyceryl phosphate synthase (279 aa).

8 helical membrane-spanning segments follow: residues 14 to 34 (VKNCLTASFGTIIGGLIASNF), 36 to 56 (FGLIGYILLASLIVFLVCGFG), 94 to 114 (LMISGIIISLFNMICFAIALI), 131 to 153 (IIGNLIVAYLTGSIFIFGGASVG), 157 to 175 (ITLILFLCALFATWSREII), 201 to 221 (IFVAIGFLLCSILLSPLPYIL), 224 to 244 (FGAPYLMAIMICNVLFILAVL), and 259 to 279 (SKYIKIIMNLVLLSFVIGSLM).

Belongs to the UbiA prenyltransferase family. DGGGP synthase subfamily. The cofactor is Mg(2+).

It localises to the cell membrane. It carries out the reaction sn-3-O-(geranylgeranyl)glycerol 1-phosphate + (2E,6E,10E)-geranylgeranyl diphosphate = 2,3-bis-O-(geranylgeranyl)-sn-glycerol 1-phosphate + diphosphate. It functions in the pathway membrane lipid metabolism; glycerophospholipid metabolism. Its function is as follows. Prenyltransferase that catalyzes the transfer of the geranylgeranyl moiety of geranylgeranyl diphosphate (GGPP) to the C2 hydroxyl of (S)-3-O-geranylgeranylglyceryl phosphate (GGGP). This reaction is the second ether-bond-formation step in the biosynthesis of archaeal membrane lipids. This Methanococcus aeolicus (strain ATCC BAA-1280 / DSM 17508 / OCM 812 / Nankai-3) protein is Digeranylgeranylglyceryl phosphate synthase.